Consider the following 2885-residue polypeptide: E3 ubiquitin-protein ligase hyd (2885 aa).

A disordered region spans residues Ser-83–Ile-138. Low complexity-rich tracts occupy residues Thr-95–Met-108 and Leu-116–Ile-138. One can recognise a UBA domain in the interval Tyr-154–Arg-196. Over residues Ala-266–Ser-276 the composition is skewed to low complexity. Disordered stretches follow at residues Ala-266 to Ser-291, Asn-580 to Asp-664, and Ala-711 to Asp-731. Polar residues-rich tracts occupy residues Thr-277–Ser-291 and Ala-598–Lys-615. 2 positions are modified to phosphoserine: Ser-628 and Ser-631. Basic and acidic residues predominate over residues Thr-650–Asp-664. Over residues Ala-711–Thr-722 the composition is skewed to low complexity. Ser-967 is modified (phosphoserine). The segment covering Ala-1008 to Ser-1032 has biased composition (low complexity). Positions Ala-1008–Asn-1035 are disordered. The UBR-type zinc-finger motif lies at Asp-1217–Ala-1285. Position 1362 is a phosphoserine (Ser-1362). The disordered stretch occupies residues Asn-1642–Ser-1761. Polar residues predominate over residues Asn-1669–Ala-1681. The segment covering Leu-1696 to Asp-1721 has biased composition (acidic residues). A compositionally biased stretch (polar residues) spans Thr-1735–Gln-1749. Ser-2037 is modified (phosphoserine). Positions Ile-2124–Asp-2143 are disordered. At Ser-2183 the chain carries Phosphoserine. Residues Asn-2473–Ser-2492 form a disordered region. Residues Pro-2482–Ser-2492 show a composition bias toward polar residues. The region spanning Ser-2484–Lys-2561 is the PABC domain. Ser-2574 carries the post-translational modification Phosphoserine. The HECT domain occupies Phe-2782–Val-2885. Catalysis depends on Cys-2854, which acts as the Glycyl thioester intermediate.

This sequence belongs to the UBR5 family.

The protein localises to the nucleus. Its subcellular location is the cytoplasm. The enzyme catalyses S-ubiquitinyl-[E2 ubiquitin-conjugating enzyme]-L-cysteine + [acceptor protein]-L-lysine = [E2 ubiquitin-conjugating enzyme]-L-cysteine + N(6)-ubiquitinyl-[acceptor protein]-L-lysine.. It participates in protein modification; protein ubiquitination. E3 ubiquitin-protein ligase which accepts ubiquitin from an E2 ubiquitin-conjugating enzyme in the form of a thioester and then directly transfers the ubiquitin to targeted substrate. Required for regulation of cell proliferation in imaginal disks and germ cells. Acts as a negative regulator of hh, ci and dpp expression in the anterior of the eye disk. Acts as a positive regulator of the canonical Wnt signaling pathway by mediating ubiquitination and degradation of gro. Catalyzes 'Lys-63'-linked polyubiquitination of akirin, thereby activating the immune deficiency pathway (Imd). This is E3 ubiquitin-protein ligase hyd (hyd) from Drosophila melanogaster (Fruit fly).